We begin with the raw amino-acid sequence, 1474 residues long: Alpha-2-macroglobulin (1474 aa).

Positions 1 to 23 (MGKNKLLHPSLVLLLLVLLPTDA) are cleaved as a signal peptide. Residues Cys-48 and Cys-86 are joined by a disulfide bond. Residues Asn-55, Asn-70, and Asn-247 are each glycosylated (N-linked (GlcNAc...) asparagine). 2 cysteine pairs are disulfide-bonded: Cys-251-Cys-299 and Cys-269-Cys-287. N-linked (GlcNAc...) asparagine glycans are attached at residues Asn-396 and Asn-410. Disulfide bonds link Cys-470-Cys-563, Cys-595-Cys-771, Cys-642-Cys-689, Cys-821-Cys-849, Cys-847-Cys-883, Cys-921-Cys-1321, Cys-1079-Cys-1127, and Cys-1352-Cys-1467. The tract at residues 690 to 728 (PQLQQYEMHGPEGLRVGFYESDVMGRGHARLVHAEEPPT) is bait region. Isoglutamyl lysine isopeptide (Gln-Lys) (interchain with K-? in other proteins) cross-links involve residues Gln-693 and Gln-694. 3 inhibitory regions span residues 704 to 709 (RVGFYE), 719 to 723 (RLVHA), and 730 to 735 (TVRKYF). Asn-869 is a glycosylation site (N-linked (GlcNAc...) asparagine). Positions 972-975 (CGEQ) form a cross-link, isoglutamyl cysteine thioester (Cys-Gln). Asn-991 carries N-linked (GlcNAc...) asparagine glycosylation. N-linked (GlcNAc...) asparagine glycosylation occurs at Asn-1424.

The protein belongs to the protease inhibitor I39 (alpha-2-macroglobulin) family. In terms of assembly, homotetramer; disulfide-linked. Plasma.

The protein localises to the secreted. In terms of biological role, is able to inhibit all four classes of proteinases by a unique 'trapping' mechanism. This protein has a peptide stretch, called the 'bait region' which contains specific cleavage sites for different proteinases. When a proteinase cleaves the bait region, a conformational change is induced in the protein which traps the proteinase. The entrapped enzyme remains active against low molecular weight substrates (activity against high molecular weight substrates is greatly reduced). Following cleavage in the bait region a thioester bond is hydrolyzed and mediates the covalent binding of the protein to the proteinase. This Pongo abelii (Sumatran orangutan) protein is Alpha-2-macroglobulin (A2M).